An 851-amino-acid polypeptide reads, in one-letter code: MINTETFDTHTPMMQQYLRLKAQHPDILLFYRMGDFYELFYDDAKKAAKLLDISLTKRGQSAGNPIPMAGVPHHAVENYLAKLVQLGESVAICEQIGDPATSKGPVERKVVRIVTPGTVTDEALLQERQDNLLAAIWHDNQGFGYATLDVTSGRFQISEMIELETIAAELQRSRPVELLYPESFEHMALIENFHGLRRRPLWEFELDTAKQQLNLQFGTRDLVGFGVDKATLALRAAGCLLQYVKDTQRTALPHIRGITMERQQDTVIMDAATRRNLELTQNLSGSTDNTLASVLDLCVTPMGSRMLKRWLHAPVRDRQILENRQQAIATLQEIGLELQPFLLQIGDLERVLARLALRSARPRDLARMRHAFQQLPDIHQVMDSSDSPYIKQLQKNIGRFDELQELLEKAIVETPPVLIRDGGVIAPGYNSELDEWRTLADGASNYLEQLEIREREKLGLDTLKVGFNGVHGYYIQVSRGQSHLVPIHYVRRQTLKNAERYIIPELKEYEDKVLTSKGKSLAIEKALYEELFDLLLPHLAELQTSAEALAELDVLANLAERAETLNYICPTLSDKPGIQITGGRHPVVEQVLREPFISNPLSLSSQRRLLIITGPNMGGKSTYMRQAALITLLAYIGSFVPAEKAVIGPVDRIFTRVGASDDLASGRSTFMVEMTETANILHNATEQSLVLMDEIGRGTSTYDGLSLAWACAENLANRIKAMTLFATHYFELTTLPEKLEGVVNIHLDAVEHGDTIAFMHSVQEGAASKSYGLAVASLAGVPREVIKRARQKLKELESLSNHATASHVDTPQLALLTEETSPAVEALENLNPDSLTPRQALEWIYRLKDMV.

614–621 (GPNMGGKS) contributes to the ATP binding site.

Belongs to the DNA mismatch repair MutS family.

Functionally, this protein is involved in the repair of mismatches in DNA. It is possible that it carries out the mismatch recognition step. This protein has a weak ATPase activity. The sequence is that of DNA mismatch repair protein MutS from Photorhabdus laumondii subsp. laumondii (strain DSM 15139 / CIP 105565 / TT01) (Photorhabdus luminescens subsp. laumondii).